The chain runs to 907 residues: Translation initiation factor IF-2 (907 aa).

A disordered region spans residues 26 to 317; it reads DAGMKKSSSD…KPKSMQHGFD (292 aa). Basic and acidic residues-rich tracts occupy residues 28–44 and 101–248; these read GMKK…EKQK and SAIE…DTDY. A compositionally biased stretch (basic residues) spans 299 to 308; the sequence is KGGRKGKLSK. The tr-type G domain maps to 406–575; the sequence is PRAPVVTIMG…LLQAEVLELT (170 aa). The G1 stretch occupies residues 415–422; it reads GHVDHGKT. 415-422 contacts GTP; that stretch reads GHVDHGKT. The G2 stretch occupies residues 440–444; sequence GITQH. The tract at residues 461–464 is G3; it reads DTPG. GTP-binding positions include 461 to 465 and 515 to 518; these read DTPGH and NKID. Residues 515–518 are G4; it reads NKID. Residues 551 to 553 form a G5 region; the sequence is SAK.

The protein belongs to the TRAFAC class translation factor GTPase superfamily. Classic translation factor GTPase family. IF-2 subfamily.

The protein resides in the cytoplasm. One of the essential components for the initiation of protein synthesis. Protects formylmethionyl-tRNA from spontaneous hydrolysis and promotes its binding to the 30S ribosomal subunits. Also involved in the hydrolysis of GTP during the formation of the 70S ribosomal complex. This chain is Translation initiation factor IF-2, found in Vibrio vulnificus (strain CMCP6).